A 120-amino-acid polypeptide reads, in one-letter code: MSKLKITNARRKQRVRIALRRAAGGRPRLSVFRSSKHIYAQVIDDQKGETLASASSLEKTMREGGKTGANIDAAKAVGKLLAERAVKNGVKEVVFDRGGYLYHGRVKALADAARESGLSF.

This sequence belongs to the universal ribosomal protein uL18 family. As to quaternary structure, part of the 50S ribosomal subunit; part of the 5S rRNA/L5/L18/L25 subcomplex. Contacts the 5S and 23S rRNAs.

Its function is as follows. This is one of the proteins that bind and probably mediate the attachment of the 5S RNA into the large ribosomal subunit, where it forms part of the central protuberance. The polypeptide is Large ribosomal subunit protein uL18 (Afipia carboxidovorans (strain ATCC 49405 / DSM 1227 / KCTC 32145 / OM5) (Oligotropha carboxidovorans)).